Here is a 241-residue protein sequence, read N- to C-terminus: Small ribosomal subunit protein bS6 (241 aa).

Over residues 97–108 the composition is skewed to basic residues; sequence KPKIRERNRKYT. Disordered regions lie at residues 97-187 and 199-241; these read KPKI…HREN and NKNH…QSSN. Residues 109–118 are compositionally biased toward basic and acidic residues; the sequence is PRRDRFDKPN. Low complexity-rich tracts occupy residues 130–151, 161–180, and 199–210; these read QDQQ…QTSQ, DDFQ…QQNQ, and NKNHQNQTSQTQ.

The protein belongs to the bacterial ribosomal protein bS6 family.

Its function is as follows. Binds together with bS18 to 16S ribosomal RNA. The polypeptide is Small ribosomal subunit protein bS6 (Mesomycoplasma hyopneumoniae (strain 7448) (Mycoplasma hyopneumoniae)).